The primary structure comprises 392 residues: Probable tRNA sulfurtransferase (392 aa).

The THUMP domain occupies 63 to 169 (GRAADAAADT…DAEAFVFLTH (107 aa)). Residues 187-188 (LV), Arg-270, Gly-292, and Gln-301 each bind ATP.

The protein belongs to the ThiI family.

It localises to the cytoplasm. It catalyses the reaction [ThiI sulfur-carrier protein]-S-sulfanyl-L-cysteine + a uridine in tRNA + 2 reduced [2Fe-2S]-[ferredoxin] + ATP + H(+) = [ThiI sulfur-carrier protein]-L-cysteine + a 4-thiouridine in tRNA + 2 oxidized [2Fe-2S]-[ferredoxin] + AMP + diphosphate. It carries out the reaction [ThiS sulfur-carrier protein]-C-terminal Gly-Gly-AMP + S-sulfanyl-L-cysteinyl-[cysteine desulfurase] + AH2 = [ThiS sulfur-carrier protein]-C-terminal-Gly-aminoethanethioate + L-cysteinyl-[cysteine desulfurase] + A + AMP + 2 H(+). The protein operates within cofactor biosynthesis; thiamine diphosphate biosynthesis. Functionally, catalyzes the ATP-dependent transfer of a sulfur to tRNA to produce 4-thiouridine in position 8 of tRNAs, which functions as a near-UV photosensor. Also catalyzes the transfer of sulfur to the sulfur carrier protein ThiS, forming ThiS-thiocarboxylate. This is a step in the synthesis of thiazole, in the thiamine biosynthesis pathway. The sulfur is donated as persulfide by IscS. This is Probable tRNA sulfurtransferase from Halobacterium salinarum (strain ATCC 29341 / DSM 671 / R1).